A 208-amino-acid chain; its full sequence is Large ribosomal subunit protein uL3 (208 aa).

The interval 130 to 168 is disordered; it reads GGSKTHGQSDRLRAPGSVGGSSFPSRTFKGQRMAGRKGS.

This sequence belongs to the universal ribosomal protein uL3 family. In terms of assembly, part of the 50S ribosomal subunit. Forms a cluster with proteins L14 and L19.

Functionally, one of the primary rRNA binding proteins, it binds directly near the 3'-end of the 23S rRNA, where it nucleates assembly of the 50S subunit. This Chloroherpeton thalassium (strain ATCC 35110 / GB-78) protein is Large ribosomal subunit protein uL3.